The primary structure comprises 358 residues: Cyclin-dependent kinase 10 (358 aa).

The 285-residue stretch at 37–321 folds into the Protein kinase domain; that stretch reads FEKLNRIGEG…AGDCLESSYF (285 aa). ATP is bound by residues 43 to 51 and lysine 66; that span reads IGEGTYGIV. The Proton acceptor role is filled by aspartate 161. Residue threonine 194 is modified to Phosphothreonine. The segment at 332–358 is disordered; the sequence is LMPTFPHHRNKRAAPAATEGQSKRCRP.

Belongs to the protein kinase superfamily. CMGC Ser/Thr protein kinase family. CDC2/CDKX subfamily. Heterodimer with CCNQ, the interaction is required for kinase activity. Interacts with ETS2. Interacts with PRK2.

It is found in the cytoplasm. The protein resides in the cytoskeleton. It localises to the cilium basal body. It carries out the reaction L-seryl-[protein] + ATP = O-phospho-L-seryl-[protein] + ADP + H(+). The catalysed reaction is L-threonyl-[protein] + ATP = O-phospho-L-threonyl-[protein] + ADP + H(+). In terms of biological role, cyclin-dependent kinase that phosphorylates the transcription factor ETS2 (in vitro) and positively controls its proteasomal degradation (in cells). Involved in the regulation of actin cytoskeleton organization through the phosphorylation of actin dynamics regulators such as PKN2. Is a negative regulator of ciliogenesis through phosphorylation of PKN2 and promotion of RhoA signaling. The chain is Cyclin-dependent kinase 10 (Cdk10) from Rattus norvegicus (Rat).